A 38-amino-acid polypeptide reads, in one-letter code: Mu-agatoxin-Hc1c (38 aa).

Intrachain disulfides connect C3–C19, C10–C24, C18–C34, and C26–C32. S38 carries the post-translational modification Serine amide.

The protein belongs to the neurotoxin 07 (Beta/delta-agtx) family. 02 (aga-3) subfamily. As to expression, expressed by the venom gland.

Its subcellular location is the secreted. Functionally, insecticidal neurotoxin that induces irreversible neuromuscular blockade in house crickets (A.domesticus). Modifies presynaptic voltage-gated sodium channels (Nav), causing them to open at the normal resting potential of the nerve. This leads to spontaneous release of neurotransmitter and repetitive action potentials in motor neurons. This chain is Mu-agatoxin-Hc1c, found in Hololena curta (Funnel-web spider).